Reading from the N-terminus, the 86-residue chain is MPKSEIHPKWYPDAKVICNGEVVMTTGSTQPELHVDVWSGNHPFFTGTQKILDTEGRVDRFMKKYGMGSANSSESKDQKEEKDSKK.

The segment at 64 to 86 (KYGMGSANSSESKDQKEEKDSKK) is disordered. The segment covering 74–86 (ESKDQKEEKDSKK) has biased composition (basic and acidic residues).

It belongs to the bacterial ribosomal protein bL31 family. Type A subfamily. In terms of assembly, part of the 50S ribosomal subunit.

Functionally, binds the 23S rRNA. The chain is Large ribosomal subunit protein bL31 from Prochlorococcus marinus (strain MIT 9301).